A 439-amino-acid chain; its full sequence is MGNNQSQGQGDKGEKKDQPKYQPPPPPTQFGKKKKRRGAETSTKLPVITPHSKCKLKQLKLERIKDYLLMEQEFLQNYDLNQPKVDENSKEQADEKIIEELRGDPLTVGNLEEIIDDNHAIVSSTVGPEHYVRIMSFVDKSKLYLGATVLLNNKTLSVVGVIDGEVDPMVNVMKVEKAPTESYSDIGGLEAQVQEMKEAIELPLTHPELYEEIGIKPPKGVILYGEPGTGKTLLAKAVANQTSATFLRVVGSELIQKYLGDGPKLVRELFRVADECAPSIVFIDEIDAVGTKRYDSQSGGEREIQRTMLELLNQLDGFDARTDVKVIMATNRIETLDPALIRPGRIDRKIEFPLPDIKTKRKIFEIHTAKMNLSEDVNLEEFVMSKDDLSGADIKAICTESGLLALRERRMRVTHTDFKKAKEKVLYRKTAGAPEGLYM.

The disordered stretch occupies residues 1–46 (MGNNQSQGQGDKGEKKDQPKYQPPPPPTQFGKKKKRRGAETSTKLP). An ATP-binding site is contributed by 225–232 (GEPGTGKT).

This sequence belongs to the AAA ATPase family.

It localises to the cytoplasm. It is found in the nucleus. In terms of biological role, the 26S proteasome is involved in the ATP-dependent degradation of ubiquitinated proteins. The regulatory (or ATPase) complex confers ATP dependency and substrate specificity to the 26S complex. Plays an important role in regulating both growth and multicellular development. The polypeptide is 26S proteasome regulatory subunit 4 homolog (psmC1) (Dictyostelium discoideum (Social amoeba)).